Reading from the N-terminus, the 545-residue chain is Ribulokinase (545 aa).

Belongs to the ribulokinase family.

It catalyses the reaction D-ribulose + ATP = D-ribulose 5-phosphate + ADP + H(+). The catalysed reaction is L-ribulose + ATP = L-ribulose 5-phosphate + ADP + H(+). It functions in the pathway carbohydrate degradation; L-arabinose degradation via L-ribulose; D-xylulose 5-phosphate from L-arabinose (bacterial route): step 2/3. This Staphylococcus aureus (strain bovine RF122 / ET3-1) protein is Ribulokinase.